Consider the following 328-residue polypeptide: DNA-directed RNA polymerase subunit alpha (328 aa).

The segment at 1-231 (MIYQMQMPAK…EHVTFFANFS (231 aa)) is alpha N-terminal domain (alpha-NTD). The alpha C-terminal domain (alpha-CTD) stretch occupies residues 247 to 328 (DEFETMRRLL…MDITRYQMKG (82 aa)).

It belongs to the RNA polymerase alpha chain family. Homodimer. The RNAP catalytic core consists of 2 alpha, 1 beta, 1 beta' and 1 omega subunit. When a sigma factor is associated with the core the holoenzyme is formed, which can initiate transcription.

The catalysed reaction is RNA(n) + a ribonucleoside 5'-triphosphate = RNA(n+1) + diphosphate. DNA-dependent RNA polymerase catalyzes the transcription of DNA into RNA using the four ribonucleoside triphosphates as substrates. The polypeptide is DNA-directed RNA polymerase subunit alpha (Chlorobium luteolum (strain DSM 273 / BCRC 81028 / 2530) (Pelodictyon luteolum)).